A 97-amino-acid polypeptide reads, in one-letter code: Large ribosomal subunit protein bL28 (97 aa).

The protein belongs to the bacterial ribosomal protein bL28 family.

This Bartonella henselae (strain ATCC 49882 / DSM 28221 / CCUG 30454 / Houston 1) (Rochalimaea henselae) protein is Large ribosomal subunit protein bL28.